The primary structure comprises 312 residues: Glyoxylate/hydroxypyruvate reductase A (312 aa).

Residue Arg227 is part of the active site. His275 acts as the Proton donor in catalysis.

It belongs to the D-isomer specific 2-hydroxyacid dehydrogenase family. GhrA subfamily.

It is found in the cytoplasm. The catalysed reaction is glycolate + NADP(+) = glyoxylate + NADPH + H(+). The enzyme catalyses (R)-glycerate + NAD(+) = 3-hydroxypyruvate + NADH + H(+). It carries out the reaction (R)-glycerate + NADP(+) = 3-hydroxypyruvate + NADPH + H(+). Catalyzes the NADPH-dependent reduction of glyoxylate and hydroxypyruvate into glycolate and glycerate, respectively. In Escherichia coli O157:H7, this protein is Glyoxylate/hydroxypyruvate reductase A.